Consider the following 1377-residue polypeptide: DNA-directed RNA polymerase subunit beta' (1377 aa).

Zn(2+)-binding residues include C60, C62, C75, and C78. Positions 449, 451, and 453 each coordinate Mg(2+). The Zn(2+) site is built by C777, C851, C858, and C861.

The protein belongs to the RNA polymerase beta' chain family. In terms of assembly, the RNAP catalytic core consists of 2 alpha, 1 beta, 1 beta' and 1 omega subunit. When a sigma factor is associated with the core the holoenzyme is formed, which can initiate transcription. Mg(2+) is required as a cofactor. It depends on Zn(2+) as a cofactor.

The enzyme catalyses RNA(n) + a ribonucleoside 5'-triphosphate = RNA(n+1) + diphosphate. Its function is as follows. DNA-dependent RNA polymerase catalyzes the transcription of DNA into RNA using the four ribonucleoside triphosphates as substrates. The chain is DNA-directed RNA polymerase subunit beta' from Borreliella afzelii (strain PKo) (Borrelia afzelii).